The sequence spans 37 residues: SCNTATCVTHRLAGLLSRSGGVVKSNFVPTNVGSQAF.

A disulfide bridge connects residues Cys-2 and Cys-7. At Phe-37 the chain carries Phenylalanine amide.

It belongs to the calcitonin family.

The protein localises to the secreted. CGRP1/CALCA is a peptide hormone that induces vasodilation mediated by the CALCRL-RAMP1 receptor complex. Dilates a variety of vessels including the coronary, cerebral and systemic vasculature. Its abundance in the CNS also points toward a neurotransmitter or neuromodulator role. It also elevates platelet cAMP. CGRP1 can also bind and activate CALCR-RAMP1 (AMYR1) receptor complex. This is Calcitonin gene-related peptide 1 (CALCA) from Ovis aries (Sheep).